A 132-amino-acid chain; its full sequence is Small ribosomal subunit protein uS8 (132 aa).

Belongs to the universal ribosomal protein uS8 family. As to quaternary structure, part of the 30S ribosomal subunit. Contacts proteins S5 and S12.

Its function is as follows. One of the primary rRNA binding proteins, it binds directly to 16S rRNA central domain where it helps coordinate assembly of the platform of the 30S subunit. This Geotalea uraniireducens (strain Rf4) (Geobacter uraniireducens) protein is Small ribosomal subunit protein uS8.